We begin with the raw amino-acid sequence, 268 residues long: Microtubule-associated protein RP/EB family member 1 (268 aa).

Residue alanine 2 is modified to N-acetylalanine. The Calponin-homology (CH) domain maps to 14-116 (NLSRHDMLAW…FVQWFKKFFD (103 aa)). Lysine 66 carries the post-translational modification N6-crotonyllysine. Tyrosine 124 is subject to Phosphotyrosine. An interaction with MTUS2/TIP150 region spans residues 124–268 (YDPVAARQGQ…GGPQEEQEEY (145 aa)). A disordered region spans residues 146–180 (LSKPKKPLGSSTAAPQRPIATQRTTAAPKAGPGMV). A compositionally biased stretch (polar residues) spans 154-170 (GSSTAAPQRPIATQRTT). Residue serine 155 is modified to Phosphoserine. The EB1 C-terminal domain occupies 185–255 (GVGNGDDEAA…LYATDEGFVI (71 aa)). Residues 206–211 (TVEDLE) are interaction with APC. A DCTN1-binding region spans residues 208 to 268 (EDLEKERDFY…GGPQEEQEEY (61 aa)). Residue lysine 220 is modified to N6-acetyllysine. The APC-binding stretch occupies residues 220–242 (KLRNIELICQENEGENDPVLQRI). Positions 232–255 (EGENDPVLQRIVDILYATDEGFVI) are interaction with SKA1.

Belongs to the MAPRE family. As to quaternary structure, homodimer. Heterodimer with MAPRE3. Interacts (via C-terminal residues 206-211) with APC (via C-terminal residues 2674-2845); the interaction inhibits association with and bundling of F-actin. Interacts with DCTN1, DIAPH1 and DIAPH2. Interacts with DCTN2, TERF1 and dynein intermediate chain. Interacts with CLASP2, DST, KIF2C and STIM1; probably required for their targeting to the growing microtubule plus ends. Interacts with MTUS2; interaction is direct and probably targets MTUS2 to microtubules. Interacts (via C-terminus) with SKA1 (via SXIP motif); the interaction is direct and stabilizes the kinetochore-microtubule attachment of the SKA1 complex. Interacts with APC2. Interacts with CLASP1. Interacts (via C-terminus) with CLIP1. Interacts with SLAIN2 and SLAIN1. Interacts with MACF1. Interacts with KIF18B; this interaction is required for efficient accumulation of KIF18B at microtubule plus ends. Interacts with MISP. Interacts with RABL2/RABL2A; binds preferentially to GTP-bound RABL2. Interacts with KCNAB2. Interacts with KNSTRN. Interacts with NCKAP5L. Interacts with AKAP9. Interacts with PDE4DIP isoform 2/MMG8/SMYLE; this interaction is required for its recruitment to the Golgi apparatus. May form a pericentrosomal complex with AKAP9, CDK5RAP2 and PDE4DIP isoform 2/MMG8/SMYLE; within this complex, MAPRE1 binding to CDK5RAP2 may be mediated by PDE4DIP. Contrary to other mammalian species, does not interact with CDK5RAP2, possibly due to the lack of conservation of the MAPRE1-binding motif in mouse CDK5RAP2. Interacts with AKNA. Interacts with GAS2L1, GAS2L2, and GAS2L3. Interacts with RARRES1 and AGBL2. Post-translationally, acetylation at Lys-220 by KAT2B/PCAF promotes dynamic kinetochore-microtubule interactions in early mitosis. In terms of processing, crotonylated by KAT5 during mitosis, promoting astral microtubule plasticity and dynamic connection between astral microtubules and the cortex during mitotic chromosome segregation, thereby ensuring accurate spindle positioning in mitosis. Decrotonylated by HDAC3. As to expression, expressed within the midpiece of sperm tail (at protein level).

It localises to the cytoplasm. The protein localises to the cytoskeleton. The protein resides in the microtubule organizing center. Its subcellular location is the centrosome. It is found in the spindle. It localises to the spindle pole. Functionally, plus-end tracking protein (+TIP) that binds to the plus-end of microtubules and regulates the dynamics of the microtubule cytoskeleton. Recruits other +TIP proteins to microtubules by binding to a conserved Ser-X-Leu-Pro (SXLP) motif in their polypeptide chains. Promotes cytoplasmic microtubule nucleation and elongation. Involved in mitotic spindle positioning by stabilizing microtubules and promoting dynamic connection between astral microtubules and the cortex during mitotic chromosome segregation. Assists chromosome alignment in metaphase by recruiting the SKA complex to the spindle and stabilizing its interactions with microtubule bundles (K-fibers). Also acts as a regulator of minus-end microtubule organization: interacts with the complex formed by AKAP9 and PDE4DIP, leading to recruit CAMSAP2 to the Golgi apparatus, thereby tethering non-centrosomal minus-end microtubules to the Golgi, an important step for polarized cell movement. Promotes elongation of CAMSAP2-decorated microtubule stretches on the minus-end of microtubules. Acts as a regulator of autophagosome transport via interaction with CAMSAP2. Functions downstream of Rho GTPases and DIAPH1 in stable microtubule formation. May play a role in cell migration. The sequence is that of Microtubule-associated protein RP/EB family member 1 (Mapre1) from Mus musculus (Mouse).